A 932-amino-acid chain; its full sequence is Protocadherin gamma-A7 (932 aa).

The first 28 residues, 1-28, serve as a signal peptide directing secretion; that stretch reads MAAQPRGGDCRGFVLLSILLGTPWEAWA. Cadherin domains lie at 29-133, 134-242, 243-347, 348-452, 453-562, and 570-682; these read GRIL…VPRF, LTEE…TPVF, SLPQ…APEV, TMTS…PPTF, PHSS…PPEI, and DGST…EPSD. Topologically, residues 29 to 692 are extracellular; the sequence is GRILYSVSEE…GPYNYDLTLY (664 aa). N419 and N545 each carry an N-linked (GlcNAc...) asparagine glycan. The helical transmembrane segment at 693–713 threads the bilayer; the sequence is LVVAVAAVSCVFLAFVLVLLA. Over 714 to 932 the chain is Cytoplasmic; it reads LRLRRWHKSR…KKKSGKKEKK (219 aa). Disordered regions lie at residues 804-841 and 902-932; these read VPSI…WPNN and ATLT…KEKK. Residues 806–841 are compositionally biased toward polar residues; the sequence is SIQQAPPNTDWRFSQAQRPGTSGSQNGDDTGTWPNN. The segment covering 922 to 932 has biased composition (basic residues); the sequence is NKKKSGKKEKK.

Its subcellular location is the cell membrane. Its function is as follows. Potential calcium-dependent cell-adhesion protein. May be involved in the establishment and maintenance of specific neuronal connections in the brain. The polypeptide is Protocadherin gamma-A7 (PCDHGA7) (Pan troglodytes (Chimpanzee)).